A 164-amino-acid polypeptide reads, in one-letter code: Small ribosomal subunit protein uS3m (164 aa).

A mitochondrion-targeting transit peptide spans M1–L23.

The protein belongs to the universal ribosomal protein uS3 family. In terms of assembly, component of the mitochondrial ribosome small subunit (28S) which comprises a 12S rRNA and about 30 distinct proteins.

Its subcellular location is the mitochondrion. The protein is Small ribosomal subunit protein uS3m (mrps-24) of Caenorhabditis elegans.